The sequence spans 706 residues: Ribosomal RNA large subunit methyltransferase K/L (706 aa).

The THUMP domain maps to 43–154; the sequence is LMYQSLLWSR…RDMASVALDL (112 aa).

Belongs to the methyltransferase superfamily. RlmKL family.

It is found in the cytoplasm. The enzyme catalyses guanosine(2445) in 23S rRNA + S-adenosyl-L-methionine = N(2)-methylguanosine(2445) in 23S rRNA + S-adenosyl-L-homocysteine + H(+). The catalysed reaction is guanosine(2069) in 23S rRNA + S-adenosyl-L-methionine = N(2)-methylguanosine(2069) in 23S rRNA + S-adenosyl-L-homocysteine + H(+). In terms of biological role, specifically methylates the guanine in position 2445 (m2G2445) and the guanine in position 2069 (m7G2069) of 23S rRNA. The protein is Ribosomal RNA large subunit methyltransferase K/L of Yersinia pseudotuberculosis serotype O:1b (strain IP 31758).